Reading from the N-terminus, the 166-residue chain is Small ribosomal subunit protein uS5 (166 aa).

Residues 11–74 (LIEKLVSVKR…ENAKKNMVSV (64 aa)) enclose the S5 DRBM domain.

The protein belongs to the universal ribosomal protein uS5 family. In terms of assembly, part of the 30S ribosomal subunit. Contacts proteins S4 and S8.

Functionally, with S4 and S12 plays an important role in translational accuracy. Its function is as follows. Located at the back of the 30S subunit body where it stabilizes the conformation of the head with respect to the body. The polypeptide is Small ribosomal subunit protein uS5 (Francisella tularensis subsp. tularensis (strain FSC 198)).